Reading from the N-terminus, the 257-residue chain is Gasdermin-like protein rcd-1-1 (257 aa).

Belongs to the gasdermin family. As to quaternary structure, heterooligomer; the heterooligomer with rcd-1-2 forms a ring-shaped pore complex when inserted in the membrane.

The protein resides in the cytoplasm. The protein localises to the cell membrane. In terms of biological role, gasdermin-like protein involved in heterokaryon incompatibility, a process that ensures that during spontaneous vegetative cell fusion, only compatible cells from the same colony survive (non-self-recognition). In N.crassa, the rcd-1 locus exists as 2 incompatible alleles, rcd-1-1 (this entry) and rcd-1-2 (AC P0DW10). During the allorecognition process, forms a heterooligomer with rcd-1-2, thereby forming a functional gasdermin-like complex that binds to membranes and forms pores, triggering cell death. Binds negatively charged phospholipids, such as cardiolipin and phosphatidylserine. Also binds to phosphoinositides, preferentially to phosphatidylinositol-3-phosphate (PtdIns-3-P), PtdIns-5-P and PtdIns-3,5-P2. The polypeptide is Gasdermin-like protein rcd-1-1 (Neurospora crassa (strain ATCC 24698 / 74-OR23-1A / CBS 708.71 / DSM 1257 / FGSC 987)).